The chain runs to 138 residues: Beta-lactamase HcpB (138 aa).

TPR repeat units lie at residues 1-28, 57-94, and 97-130; these read MVGG…NEMF, GNGC…NDQD, and LILG…GSED. Disulfide bonds link Cys22/Cys30, Cys52/Cys60, Cys88/Cys96, and Cys124/Cys132.

It belongs to the hcp beta-lactamase family.

The enzyme catalyses a beta-lactam + H2O = a substituted beta-amino acid. Its function is as follows. Hydrolyzes 6-aminopenicillinic acid and 7-aminocephalosporanic acid (ACA) derivatives. The polypeptide is Beta-lactamase HcpB (hcpB) (Helicobacter pylori (strain ATCC 700392 / 26695) (Campylobacter pylori)).